We begin with the raw amino-acid sequence, 820 residues long: Catenin beta (820 aa).

Polar residues predominate over residues 1–16; that stretch reads MEQARYSNQQSVNPQQ. The disordered stretch occupies residues 1–74; sequence MEQARYSNQQ…SRHEDGGEEA (74 aa). Residues 52–63 are compositionally biased toward low complexity; that stretch reads SSATSHPPSVSS. ARM repeat units follow at residues 157–196, 199–239, 241–280, 283–322, 367–405, 406–445, 448–489, 495–535, 603–642, and 644–683; these read NYQD…QLSK, ASRH…NLSH, RAGL…NLLL, EGSK…ILAY, HNNK…RNLS, DCHR…NLTC, SRNK…HVTS, EMGQ…NLAL, SHNR…ELSL, and KQGA…RMSD. Positions 708 to 811 are disordered; sequence PWGDPLDMPS…LDSIPPADNT (104 aa). Residues 785-796 are compositionally biased toward low complexity; the sequence is GMDPGLPDMGPP.

This sequence belongs to the beta-catenin family.

Its subcellular location is the cytoplasm. The protein localises to the cytoskeleton. Its function is as follows. Binds to the cytoplasmic domain of the cell-cell adhesion molecule E-cadherin, and perhaps to other (membrane) proteins. The association of catenins to cadherins produces a complex which is linked to the actin filament network, and which seems to be of primary importance for cadherins cell-adhesion properties. The polypeptide is Catenin beta (Tripneustes gratilla (Hawaian sea urchin)).